The following is a 291-amino-acid chain: 2-dehydro-3-deoxyphosphooctonate aldolase 2 (291 aa).

A2 carries the N-acetylalanine modification.

It belongs to the KdsA family. Expressed in roots, apical meristem, emerging leaves, hydathodes of young leaves, styles of mature flowers and funicules of mature siliques.

The protein resides in the cytoplasm. It catalyses the reaction D-arabinose 5-phosphate + phosphoenolpyruvate + H2O = 3-deoxy-alpha-D-manno-2-octulosonate-8-phosphate + phosphate. In terms of biological role, catalyzes the stereospecific condensation of D-arabinose 5-phosphate and phosphoenolpyruvate to form 3-deoxy-D-manno-octulosonate 8-phosphate (KDO-8-phosphate) and inorganic phosphate. Involved in the biosynthesis of 3-deoxy-D-manno-octulosonate (KDO) which is an indispensable component of rhamnogalacturonan II (RG-II), a structurally complex pectic polysaccharide of the primary cell wall. RG-II is essential for the cell wall integrity of rapidly growing tissues and pollen tube growth and elongation. The chain is 2-dehydro-3-deoxyphosphooctonate aldolase 2 (KDSA2) from Arabidopsis thaliana (Mouse-ear cress).